The sequence spans 115 residues: NADH-ubiquinone oxidoreductase chain 3 (115 aa).

The next 3 membrane-spanning stretches (helical) occupy residues 4-24 (ILTL…AFWL), 55-75 (FFLV…LLPL), and 84-104 (SYLT…GLAY).

This sequence belongs to the complex I subunit 3 family. Core subunit of respiratory chain NADH dehydrogenase (Complex I) which is composed of 45 different subunits. Interacts with TMEM186. Interacts with TMEM242.

Its subcellular location is the mitochondrion inner membrane. It catalyses the reaction a ubiquinone + NADH + 5 H(+)(in) = a ubiquinol + NAD(+) + 4 H(+)(out). Functionally, core subunit of the mitochondrial membrane respiratory chain NADH dehydrogenase (Complex I) which catalyzes electron transfer from NADH through the respiratory chain, using ubiquinone as an electron acceptor. Essential for the catalytic activity of complex I. The sequence is that of NADH-ubiquinone oxidoreductase chain 3 from Necromys lactens (Rufous-bellied bolo mouse).